The sequence spans 138 residues: Large ribosomal subunit protein eL32 (138 aa).

Belongs to the eukaryotic ribosomal protein eL32 family.

The polypeptide is Large ribosomal subunit protein eL32 (rpl32e) (Saccharolobus solfataricus (strain ATCC 35092 / DSM 1617 / JCM 11322 / P2) (Sulfolobus solfataricus)).